Consider the following 211-residue polypeptide: MARLSGQSSGRQTGQGTSAEAIRQQREELRRQRELRLQQQQQAERQQQRQQYRTEQSPIVPAATSSSRYSQFGIYRNQPGDVVDTLASSLPRRTTTTRPEVNRTVPRVKKRYRPGTKALREIRQYQKSTDLLIRKLPFARLVREISLDFVGPSYGLRWQSNAILALQEASESFLIHLLEDTNLCAIHAKRVTIMQKDIQLARRIRGQSWIL.

Over residues 1-18 (MARLSGQSSGRQTGQGTS) the composition is skewed to low complexity. Residues 1–63 (MARLSGQSSG…TEQSPIVPAA (63 aa)) are disordered. A compositionally biased stretch (basic and acidic residues) spans 23–36 (RQQREELRRQRELR). The span at 37–56 (LQQQQQAERQQQRQQYRTEQ) shows a compositional bias: low complexity. An H3-like region spans residues 104–207 (TVPRVKKRYR…IQLARRIRGQ (104 aa)).

The protein belongs to the histone H3 family. Component of centromeric nucleosomes, where DNA is wrapped around a histone octamer core. The octamer contains two molecules each of H2A, H2B, CSE4/CENPA and H4 assembled in one CSE4-H4 heterotetramer and two H2A-H2B heterodimers. Interacts with the inner kinetochore. Post-translationally, ubiquitinated. Is degraded through ubiquitin-mediated proteolysis when not protected by its association to the kinetochore.

It localises to the nucleus. Its subcellular location is the chromosome. The protein resides in the centromere. Functionally, histone H3-like nucleosomal protein that is specifically found in centromeric nucleosomes. Replaces conventional H3 in the nucleosome core of centromeric chromatin that serves as an assembly site for the inner kinetochore. Required for recruitment and assembly of kinetochore proteins, mitotic progression and chromosome segregation. May serve as an epigenetic mark that propagates centromere identity through replication and cell division. The polypeptide is Histone H3-like centromeric protein CSE4 (CSE4) (Candida albicans (strain SC5314 / ATCC MYA-2876) (Yeast)).